Here is a 331-residue protein sequence, read N- to C-terminus: Trans-O-hydroxybenzylidenepyruvate hydratase-aldolase (331 aa).

It belongs to the DapA family.

The enzyme catalyses (3E)-4-(2-hydroxyphenyl)-2-oxobut-3-enoate + H2O = salicylaldehyde + pyruvate. It functions in the pathway aromatic compound metabolism; naphthalene degradation. Functionally, involved in the naphthalene upper catabolic pathway. Catalyzes the transformation of trans-O-hydroxybenzylidenepyruvate (THBPA) to salicylaldehyde and pyruvate. The reaction is reversible. Can also use substrate which carry trans-alpha,beta-unsaturated keto acid side chain and adjacent hydroxyl group such as trans-4-(3-hydroxy-2-thianaphthenyl)-2-oxo-but-3-enoate, trans-4-(3-hydroxy-2-benzofuranyl)-2-oxobut-3-enoate, and trans-4-(3-hydroxy-2-thienyl)-2-oxobut-3-enoate. The chain is Trans-O-hydroxybenzylidenepyruvate hydratase-aldolase (nahE) from Pseudomonas putida (Arthrobacter siderocapsulatus).